The following is a 350-amino-acid chain: MSHRTGIQASEDVKEIFARARNGKYRLLKISIENEQLVIGSYSQPSDSWDKDYDSFVLPLLEDKQPCYILFRLDSQNAQGYEWIFIAWSPDHSHVRQKMLYAATRATLKKEFGGGHIKDEVFGTVKEDVSLHGYKKYLLSQSSPAPLTAAEEELRQIKINEVQTDVGVDTKHQTLQGVAFPISREAFQALEKLNNRQLNYVQLEIDIKNEIIILANTTDTELKDLPKRIPKDSARYHFFLYKHSHEGDYLESIVFIYSMPGYTCSIRERMLYSSCKSPLLEIVERQLQMGVIRKIEIDNGDELTADFLYEEVHPKQHAHKQSFAKPKGPAGKRGIRRLIRGPAETEATTD.

The residue at position 2 (Ser-2) is an N-acetylserine. Residues 2-139 enclose the ADF-H 1 domain; the sequence is SHRTGIQASE…SLHGYKKYLL (138 aa). Phosphoserine is present on residues Ser-143 and Ser-277. The 139-residue stretch at 175-313 folds into the ADF-H 2 domain; sequence LQGVAFPISR…TADFLYEEVH (139 aa). Position 309 is a phosphotyrosine (Tyr-309). The disordered stretch occupies residues 316-350; the sequence is QHAHKQSFAKPKGPAGKRGIRRLIRGPAETEATTD. Thr-349 is subject to Phosphothreonine.

It belongs to the actin-binding proteins ADF family. Twinfilin subfamily. Interacts with G-actin; ADP-actin form and capping protein (CP). May also be able to interact with TWF2 and phosphoinositides, PI(4,5)P2. When bound to PI(4,5)P2, it is down-regulated. Interacts with ACTG1. Phosphorylated on serine and threonine residues.

Its subcellular location is the cytoplasm. It localises to the cytoskeleton. Actin-binding protein involved in motile and morphological processes. Inhibits actin polymerization, likely by sequestering G-actin. By capping the barbed ends of filaments, it also regulates motility. Seems to play an important role in clathrin-mediated endocytosis and distribution of endocytic organelles. This Pongo abelii (Sumatran orangutan) protein is Twinfilin-1 (TWF1).